The chain runs to 386 residues: S-adenosylmethionine synthase (386 aa).

ATP is bound at residue H16. A Mg(2+)-binding site is contributed by D18. E44 is a K(+) binding site. L-methionine-binding residues include E57 and Q100. Residues 100–110 are flexible loop; that stretch reads QSPDINQGVDR. Residues 164–166, 230–231, D239, 245–246, A262, and K266 contribute to the ATP site; these read DGK, KF, and RK. L-methionine is bound at residue D239. K270 contacts L-methionine.

This sequence belongs to the AdoMet synthase family. In terms of assembly, homotetramer; dimer of dimers. Mg(2+) serves as cofactor. It depends on K(+) as a cofactor.

It localises to the cytoplasm. It catalyses the reaction L-methionine + ATP + H2O = S-adenosyl-L-methionine + phosphate + diphosphate. Its pathway is amino-acid biosynthesis; S-adenosyl-L-methionine biosynthesis; S-adenosyl-L-methionine from L-methionine: step 1/1. Catalyzes the formation of S-adenosylmethionine (AdoMet) from methionine and ATP. The overall synthetic reaction is composed of two sequential steps, AdoMet formation and the subsequent tripolyphosphate hydrolysis which occurs prior to release of AdoMet from the enzyme. The chain is S-adenosylmethionine synthase from Wolinella succinogenes (strain ATCC 29543 / DSM 1740 / CCUG 13145 / JCM 31913 / LMG 7466 / NCTC 11488 / FDC 602W) (Vibrio succinogenes).